The sequence spans 471 residues: Ribulose bisphosphate carboxylase large chain 2 (471 aa).

Residues Asn-116 and Thr-166 each coordinate substrate. The active-site Proton acceptor is the Lys-168. Lys-170 is a binding site for substrate. Mg(2+) contacts are provided by Lys-194, Asp-196, and Glu-197. Lys-194 bears the N6-carboxylysine mark. Residue His-287 is the Proton acceptor of the active site. The substrate site is built by Arg-288, His-320, and Ser-372.

This sequence belongs to the RuBisCO large chain family. Type I subfamily. In terms of assembly, heterohexadecamer of 8 large chains and 8 small chains; disulfide-linked. The disulfide link is formed within the large subunit homodimers. The cofactor is Mg(2+). In terms of processing, the disulfide bond which can form in the large chain dimeric partners within the hexadecamer appears to be associated with oxidative stress and protein turnover.

The catalysed reaction is 2 (2R)-3-phosphoglycerate + 2 H(+) = D-ribulose 1,5-bisphosphate + CO2 + H2O. It catalyses the reaction D-ribulose 1,5-bisphosphate + O2 = 2-phosphoglycolate + (2R)-3-phosphoglycerate + 2 H(+). In terms of biological role, ruBisCO catalyzes two reactions: the carboxylation of D-ribulose 1,5-bisphosphate, the primary event in carbon dioxide fixation, as well as the oxidative fragmentation of the pentose substrate. Both reactions occur simultaneously and in competition at the same active site. The protein is Ribulose bisphosphate carboxylase large chain 2 of Allochromatium vinosum (strain ATCC 17899 / DSM 180 / NBRC 103801 / NCIMB 10441 / D) (Chromatium vinosum).